Here is a 501-residue protein sequence, read N- to C-terminus: Orsellinic acid/F9775 biosynthesis cluster protein D (501 aa).

The tract at residues 137-189 (EVTPTTEDEDDEENESENDEEEGDVDLEEQEDDNGGRQSTTVTTSPGPSAPSV) is disordered. Positions 142–169 (TEDEDDEENESENDEEEGDVDLEEQEDD) are enriched in acidic residues. Polar residues predominate over residues 172–183 (GRQSTTVTTSPG).

Part of the gene cluster that mediates the biosynthesis of orsellinic acid, as well as of the cathepsin K inhibitors F9775 A and F9775 B. The non-reducing polyketide synthase orsA produces orsellinic acid by condensing acetyl-CoA with 3 malonyl-CoA units. Further modifications by the decarboxylase orsB and the tyrosinase-like protein orsC lead to the production of F9775 A and F9775 B. The functions of orsD and orsE remain unclear since only orsB and orsC are required to convert orsellinic acid into F9775 A and F9775 B. The sequence is that of Orsellinic acid/F9775 biosynthesis cluster protein D from Emericella nidulans (strain FGSC A4 / ATCC 38163 / CBS 112.46 / NRRL 194 / M139) (Aspergillus nidulans).